Here is a 453-residue protein sequence, read N- to C-terminus: Sialic acid-binding Ig-like lectin 6 (453 aa).

An N-terminal signal peptide occupies residues 1 to 26 (MQGAQEASASEMLPLLLPLLWAGALA). The Extracellular portion of the chain corresponds to 27 to 347 (QERRFQLEGP…WKPEGRAGGV (321 aa)). One can recognise an Ig-like V-type domain in the interval 28–123 (ERRFQLEGPE…RDNAAYFFRL (96 aa)). Intrachain disulfides connect C46-C172, C51-C104, and C166-C215. Residue N103 is glycosylated (N-linked (GlcNAc...) asparagine). N-acetylneuraminate is bound at residue R122. The Ig-like C2-type 1 domain occupies 148 to 231 (PNISIPGTLE…AGVTMERTIQ (84 aa)). Residues N149 and N163 are each glycosylated (N-linked (GlcNAc...) asparagine). N233 carries N-linked (GlcNAc...) asparagine glycosylation. Residues 238–333 (PQKVAISIFQ…PLGSLQISLS (96 aa)) enclose the Ig-like C2-type 2 domain. The cysteines at positions 274 and 319 are disulfide-linked. Residues 348-368 (LGAVWGASITTLVFLCVCFIF) form a helical membrane-spanning segment. Over 369-453 (RVKTRRKKAA…TEYSEIKIHK (85 aa)) the chain is Cytoplasmic. Residues 424–429 (LHYAVL) carry the ITIM motif motif. Residues 444–449 (TEYSEI) carry the SLAM-like motif motif.

It belongs to the immunoglobulin superfamily. SIGLEC (sialic acid binding Ig-like lectin) family. As to quaternary structure, interacts with LEP. As to expression, expressed at high levels in placenta (cyto- and syncytiotrophoblastic cells) and at lower levels in spleen, peripheral blood leukocytes (predominantly B-cells) and small intestine.

It localises to the cell membrane. It is found in the secreted. Functionally, putative adhesion molecule that mediates sialic-acid dependent binding to cells. Binds to alpha-2,6-linked sialic acid. The sialic acid recognition site may be masked by cis interactions with sialic acids on the same cell surface. The chain is Sialic acid-binding Ig-like lectin 6 (SIGLEC6) from Homo sapiens (Human).